The chain runs to 553 residues: Glucose-6-phosphate isomerase (553 aa).

Catalysis depends on E357, which acts as the Proton donor. Residues H388 and K514 contribute to the active site. The segment at 527 to 553 (ADSPAAQSDSSTDALVRRYRTERGRTA) is disordered. Residues 541 to 553 (LVRRYRTERGRTA) are compositionally biased toward basic and acidic residues.

It belongs to the GPI family.

It localises to the cytoplasm. The enzyme catalyses alpha-D-glucose 6-phosphate = beta-D-fructose 6-phosphate. The protein operates within carbohydrate biosynthesis; gluconeogenesis. It participates in carbohydrate degradation; glycolysis; D-glyceraldehyde 3-phosphate and glycerone phosphate from D-glucose: step 2/4. Catalyzes the reversible isomerization of glucose-6-phosphate to fructose-6-phosphate. This Mycolicibacterium vanbaalenii (strain DSM 7251 / JCM 13017 / BCRC 16820 / KCTC 9966 / NRRL B-24157 / PYR-1) (Mycobacterium vanbaalenii) protein is Glucose-6-phosphate isomerase.